The primary structure comprises 265 residues: Aquaporin-5 (265 aa).

Residues 1-12 lie on the Cytoplasmic side of the membrane; the sequence is MKKEVCSAAFLK. Residues 13–33 traverse the membrane as a helical segment; that stretch reads AVFAEFLATLIFVFFGLGSAL. Residues 34-39 lie on the Extracellular side of the membrane; it reads KWPSAM. A helical transmembrane segment spans residues 40-60; it reads PSVLQISLAFGLAIGTMAQAL. The Cytoplasmic portion of the chain corresponds to 61–65; it reads GPVSG. Positions 66–74 form an intramembrane region, discontinuously helical; that stretch reads GHMNPAITL. The short motif at 69–71 is the NPA 1 element; that stretch reads NPA. At 75 to 87 the chain is on the cytoplasmic side; sequence ALLVGNQISLLRA. Residues 88–108 traverse the membrane as a helical segment; the sequence is VFYLVAQLVGAIAGAAILYGL. The Extracellular segment spans residues 109-126; it reads APYNARSNLAVNALNNNT. N-linked (GlcNAc...) asparagine glycans are attached at residues Asn124 and Asn125. The helical transmembrane segment at 127-147 threads the bilayer; the sequence is TAGQAVVAEMILTFQLALCVF. Residues 148 to 158 are Cytoplasmic-facing; it reads SSTDSRRTSPV. The helical transmembrane segment at 159-179 threads the bilayer; that stretch reads GSPALSIGLSVTLGHLVGIYF. Position 180 (Thr180) is a topological domain, extracellular. Positions 181–191 form an intramembrane region, discontinuously helical; sequence GCSMNPARSFG. Positions 185-187 match the NPA 2 motif; it reads NPA. Residues 192 to 203 are Extracellular-facing; that stretch reads PAVIMSRFSSAH. Residues 204–224 form a helical membrane-spanning segment; sequence WVFWVGPIVGAATAAIIYFYL. Residues 225 to 265 are Cytoplasmic-facing; that stretch reads LFPHSLSLSDRVAILKGTYEPDEDWEESQEERKKTMELTAH.

Belongs to the MIP/aquaporin (TC 1.A.8) family. As to quaternary structure, homotetramer; each monomer provides an independent water pore. Interacts with TRPV4; the interaction is probably indirect and regulates TRPV4 activation by hypotonicity.

It localises to the apical cell membrane. The protein resides in the cell membrane. It is found in the cytoplasmic vesicle membrane. It catalyses the reaction H2O(in) = H2O(out). Functionally, aquaporins form homotetrameric transmembrane channels, with each monomer independently mediating water transport across the plasma membrane along its osmotic gradient. Plays an important role in fluid secretion in salivary glands. Required for TRPV4 activation by hypotonicity. Together with TRPV4, controls regulatory volume decrease in salivary epithelial cells. Seems to play a redundant role in water transport in the eye, lung and in sweat glands. In Ovis aries (Sheep), this protein is Aquaporin-5.